We begin with the raw amino-acid sequence, 441 residues long: CBL-interacting serine/threonine-protein kinase 3 (441 aa).

The region spanning 14–269 is the Protein kinase domain; that stretch reads YEVGRTIGEG…PQEVFEDEWF (256 aa). ATP contacts are provided by residues 20 to 28 and Lys43; that span reads IGEGTFAKV. Catalysis depends on Asp137, which acts as the Proton acceptor. The segment at 155–184 is activation loop; sequence DFGLSALSQQVRDDGLLHTSCGTPNYVAPE. The region spanning 307 to 331 is the NAF domain; the sequence is EQPAAINAFEIISMSRGLNLENLFD. Residues 337 to 366 are PPI; sequence KRETRITLRGGANEIIEKIEEAAKPLGFDV.

The protein belongs to the protein kinase superfamily. CAMK Ser/Thr protein kinase family. SNF1 subfamily. As to quaternary structure, interacts with CBL3 and CBL9. It depends on Mn(2+) as a cofactor. In terms of tissue distribution, mostly expressed in germinating seeds and young seedlings. Detected at low levels in roots, stems, leaves and flowers.

It catalyses the reaction L-seryl-[protein] + ATP = O-phospho-L-seryl-[protein] + ADP + H(+). It carries out the reaction L-threonyl-[protein] + ATP = O-phospho-L-threonyl-[protein] + ADP + H(+). Involved in the resistance to some abiotic stresses (e.g. high salt, hyperosmotic stress) in young seedlings, by regulating the expression of several stress-inducible genes (cold- and salt-induced genes but not drought-responsive genes). Required for the ABA response during germination. CIPK serine-threonine protein kinases interact with CBL proteins. Binding of a CBL protein to the regulatory NAF domain of CIPK protein lead to the activation of the kinase in a calcium-dependent manner. The CBL9/CIPK3 complex acts in the regulation of abscisic acid response in seed germination. This Arabidopsis thaliana (Mouse-ear cress) protein is CBL-interacting serine/threonine-protein kinase 3 (CIPK3).